The following is a 64-amino-acid chain: U9-ctenitoxin-Pr1a (64 aa).

5 disulfides stabilise this stretch: Cys3/Cys15, Cys9/Cys24, Cys14/Cys47, Cys34/Cys55, and Cys49/Cys61.

As to expression, expressed by the venom gland.

The protein localises to the secreted. Non-toxic to mice and insects. In Phoneutria reidyi (Brazilian Amazonian armed spider), this protein is U9-ctenitoxin-Pr1a.